The primary structure comprises 355 residues: 4-hydroxy-3-methylbut-2-en-1-yl diphosphate synthase (flavodoxin) (355 aa).

[4Fe-4S] cluster is bound by residues Cys-266, Cys-269, Cys-301, and Glu-308.

The protein belongs to the IspG family. The cofactor is [4Fe-4S] cluster.

The catalysed reaction is (2E)-4-hydroxy-3-methylbut-2-enyl diphosphate + oxidized [flavodoxin] + H2O + 2 H(+) = 2-C-methyl-D-erythritol 2,4-cyclic diphosphate + reduced [flavodoxin]. Its pathway is isoprenoid biosynthesis; isopentenyl diphosphate biosynthesis via DXP pathway; isopentenyl diphosphate from 1-deoxy-D-xylulose 5-phosphate: step 5/6. Its function is as follows. Converts 2C-methyl-D-erythritol 2,4-cyclodiphosphate (ME-2,4cPP) into 1-hydroxy-2-methyl-2-(E)-butenyl 4-diphosphate. The protein is 4-hydroxy-3-methylbut-2-en-1-yl diphosphate synthase (flavodoxin) of Caldanaerobacter subterraneus subsp. tengcongensis (strain DSM 15242 / JCM 11007 / NBRC 100824 / MB4) (Thermoanaerobacter tengcongensis).